Reading from the N-terminus, the 319-residue chain is Tetrahydromethanopterin S-methyltransferase subunit H (319 aa).

The protein belongs to the MtrH family. The complex is composed of 8 subunits; MtrA, MtrB, MtrC, MtrD, MtrE, MtrF, MtrG and MtrH.

It catalyses the reaction 5-methyl-5,6,7,8-tetrahydromethanopterin + coenzyme M + 2 Na(+)(in) = 5,6,7,8-tetrahydromethanopterin + methyl-coenzyme M + 2 Na(+)(out). It functions in the pathway one-carbon metabolism; methanogenesis from CO(2); methyl-coenzyme M from 5,10-methylene-5,6,7,8-tetrahydromethanopterin: step 2/2. Part of a complex that catalyzes the formation of methyl-coenzyme M and tetrahydromethanopterin from coenzyme M and methyl-tetrahydromethanopterin. This is an energy-conserving, sodium-ion translocating step. MtrH catalyzes the transfer of the methyl group from methyl-tetrahydromethanopterin to the corrinoid prosthetic group of MtrA. In Methanocaldococcus jannaschii (strain ATCC 43067 / DSM 2661 / JAL-1 / JCM 10045 / NBRC 100440) (Methanococcus jannaschii), this protein is Tetrahydromethanopterin S-methyltransferase subunit H.